Consider the following 74-residue polypeptide: DNA-directed RNA polymerase subunit omega (74 aa).

Belongs to the RNA polymerase subunit omega family. In terms of assembly, the RNAP catalytic core consists of 2 alpha, 1 beta, 1 beta' and 1 omega subunit. When a sigma factor is associated with the core the holoenzyme is formed, which can initiate transcription.

It carries out the reaction RNA(n) + a ribonucleoside 5'-triphosphate = RNA(n+1) + diphosphate. Its function is as follows. Promotes RNA polymerase assembly. Latches the N- and C-terminal regions of the beta' subunit thereby facilitating its interaction with the beta and alpha subunits. The polypeptide is DNA-directed RNA polymerase subunit omega (Helicobacter acinonychis (strain Sheeba)).